The sequence spans 339 residues: Protein pelota homolog (339 aa).

Belongs to the eukaryotic release factor 1 family. Pelota subfamily. In terms of assembly, monomer. It depends on a divalent metal cation as a cofactor.

Its subcellular location is the cytoplasm. Its function is as follows. May function in recognizing stalled ribosomes, interact with stem-loop structures in stalled mRNA molecules, and effect endonucleolytic cleavage of the mRNA. May play a role in the release non-functional ribosomes and degradation of damaged mRNAs. Has endoribonuclease activity. This Thermoplasma acidophilum (strain ATCC 25905 / DSM 1728 / JCM 9062 / NBRC 15155 / AMRC-C165) protein is Protein pelota homolog (pelA).